A 347-amino-acid chain; its full sequence is Selenide, water dikinase (347 aa).

The active site involves U17. Residue U17 is a non-standard amino acid, selenocysteine. ATP-binding positions include K20 and 48-50 (TAD). D51 lines the Mg(2+) pocket. Residues D68, D91, and 139-141 (GHS) contribute to the ATP site. Residue D91 coordinates Mg(2+). Mg(2+) is bound at residue D227.

This sequence belongs to the selenophosphate synthase 1 family. Class I subfamily. In terms of assembly, homodimer. Mg(2+) serves as cofactor.

It catalyses the reaction hydrogenselenide + ATP + H2O = selenophosphate + AMP + phosphate + 2 H(+). Synthesizes selenophosphate from selenide and ATP. This is Selenide, water dikinase from Haemophilus influenzae (strain 86-028NP).